The following is a 919-amino-acid chain: Probable dipeptidyl-aminopeptidase B (919 aa).

Residues 1–89 are disordered; the sequence is MGANSRVNDD…DGYVPSGGKP (89 aa). At 1–95 the chain is on the cytoplasmic side; sequence MGANSRVNDD…GGKPAQRRTR (95 aa). The segment covering 27–38 has biased composition (low complexity); it reads DSSSTASISLTL. Positions 44–55 are enriched in polar residues; sequence HTATEPSKSTNG. A helical; Signal-anchor for type II membrane protein membrane pass occupies residues 96–116; that stretch reads IVFWLLVALCVGGWAMAFIIM. The Vacuolar portion of the chain corresponds to 117–919; it reads ATSPNNRHST…RVIRRLLHFG (803 aa). The interval 121 to 150 is disordered; that stretch reads NNRHSTSDSSSGGSESEIVKPNTPHDGKKI. Residues 127–136 are compositionally biased toward low complexity; it reads SDSSSGGSES. Residues N207, N303, N355, N577, and N665 are each glycosylated (N-linked (GlcNAc...) asparagine). S760 (charge relay system) is an active-site residue. Residues N814 and N819 are each glycosylated (N-linked (GlcNAc...) asparagine). Residues D837 and H870 each act as charge relay system in the active site.

This sequence belongs to the peptidase S9B family.

It is found in the vacuole membrane. The enzyme catalyses Release of an N-terminal dipeptide, Xaa-Yaa-|-Zaa-, from a polypeptide, preferentially when Yaa is Pro, provided Zaa is neither Pro nor hydroxyproline.. Type IV dipeptidyl-peptidase which removes N-terminal dipeptides sequentially from polypeptides having unsubstituted N-termini provided that the penultimate residue is proline. The sequence is that of Probable dipeptidyl-aminopeptidase B (DAPB) from Arthroderma otae (strain ATCC MYA-4605 / CBS 113480) (Microsporum canis).